The following is a 222-amino-acid chain: Eukaryotic translation initiation factor 3 subunit K (222 aa).

A PCI domain is found at 46–208 (YDLEANLAVL…KIKTKNITEK (163 aa)).

Belongs to the eIF-3 subunit K family. As to quaternary structure, component of the eukaryotic translation initiation factor 3 (eIF-3) complex. The eIF-3 complex interacts with pix.

The protein localises to the cytoplasm. Component of the eukaryotic translation initiation factor 3 (eIF-3) complex, which is involved in protein synthesis of a specialized repertoire of mRNAs and, together with other initiation factors, stimulates binding of mRNA and methionyl-tRNAi to the 40S ribosome. The eIF-3 complex specifically targets and initiates translation of a subset of mRNAs involved in cell proliferation. This chain is Eukaryotic translation initiation factor 3 subunit K, found in Drosophila grimshawi (Hawaiian fruit fly).